The sequence spans 218 residues: Glutathione S-transferase Mu 4 (218 aa).

Residues 1–88 form the GST N-terminal domain; that stretch reads MPMTLGYWDI…YIARKHNLCG (88 aa). Residues 7–8, 46–50, 59–60, and 72–73 each bind glutathione; these read YW, WLSEK, NL, and QS. A GST C-terminal domain is found at 90 to 208; it reads TEEEKIRVDI…KTSRFLRTPL (119 aa). Tyr116 is a binding site for substrate.

This sequence belongs to the GST superfamily. Mu family. Homodimer. Widely expressed.

It localises to the cytoplasm. The catalysed reaction is RX + glutathione = an S-substituted glutathione + a halide anion + H(+). It carries out the reaction 1-chloro-2,4-dinitrobenzene + glutathione = 2,4-dinitrophenyl-S-glutathione + chloride + H(+). It catalyses the reaction (13S,14S)-epoxy-(4Z,7Z,9E,11E,16Z,19Z)-docosahexaenoate + glutathione = (13R)-S-glutathionyl-(14S)-hydroxy-(4Z,7Z,9E,11E,16Z,19Z)-docosahexaenoate. The enzyme catalyses leukotriene C4 = leukotriene A4 + glutathione. Functionally, conjugation of reduced glutathione to a wide number of exogenous and endogenous hydrophobic electrophiles. Catalyzes the conjugation of leukotriene A4 with reduced glutathione (GSH) to form leukotriene C4. Can also catalyze the transfer of a glutathionyl group from glutathione (GSH) to 13(S),14(S)-epoxy-docosahexaenoic acid to form maresin conjugate in tissue regeneration 1 (MCTR1), a bioactive lipid mediator that possess potent anti-inflammatory and proresolving actions. The protein is Glutathione S-transferase Mu 4 of Mus musculus (Mouse).